The following is a 275-amino-acid chain: MAIYAVGDLQGCYREFRELLDLVRFDETKDKLWLVGDLVNRGPDSLSVLRFVKELNDSAIMVLGNHDLHLLLVAEGCAELSRSDTLQNILDAPDRDELLDWLRRQKLLHVDGNYVMVHAGLLPSWSIEQAQVLAALVESALRGSEFHEFCRQMYGNRPDHWNETLHGYERLRVIVNAMTRMRVCTPHGRMDFAHKGSVKDIPPGYLPWFDVPERASRKATVICGHWSALGLEIRANLMALDTGCLWGGSLTAVRLEDRKVFQTECGAGGATRHWQ.

The protein belongs to the Ap4A hydrolase family.

It carries out the reaction P(1),P(4)-bis(5'-adenosyl) tetraphosphate + H2O = 2 ADP + 2 H(+). Its function is as follows. Hydrolyzes diadenosine 5',5'''-P1,P4-tetraphosphate to yield ADP. The polypeptide is Bis(5'-nucleosyl)-tetraphosphatase, symmetrical (Nitrosospira multiformis (strain ATCC 25196 / NCIMB 11849 / C 71)).